Here is a 243-residue protein sequence, read N- to C-terminus: Transcription factor TCP6 (243 aa).

Residues 1–55 are disordered; sequence MVMEPKKNQNLPSFLNPSRQNQDNDKKRKQTEVKGFDIVVGEKRKKKENEEEDQE. Over residues 8–21 the composition is skewed to polar residues; sequence NQNLPSFLNPSRQN. A compositionally biased stretch (basic and acidic residues) spans 22–35; it reads QDNDKKRKQTEVKG. A coiled-coil region spans residues 42-66; the sequence is EKRKKKENEEEDQEIQILYEKEKKK. Residues 68-122 form the TCP domain; that stretch reads NKDRHLKVEGRGRRVRLPPLCAARIYQLTKELGHKSDGETLEWLLQHAEPSILSA.

As to quaternary structure, interacts with SPL.

The protein localises to the nucleus. In Arabidopsis thaliana (Mouse-ear cress), this protein is Transcription factor TCP6 (TCP6).